The primary structure comprises 399 residues: Serpin-Z1B (399 aa).

The segment at 344–368 (GTEAAASTAIKMVPQQARPPSVMDF) is RCL.

Belongs to the serpin family.

Inhibits chymotrypsin and cathepsin G in vitro. This chain is Serpin-Z1B, found in Triticum aestivum (Wheat).